A 219-amino-acid chain; its full sequence is MISNSEYHKEYMKGTTTVGLLCKDGVVLATDKRATMGNLIADKEAKKLYKIDDYIAMTIAGSVGDAQSLIRIISAEAKIHKMRTGNNMTPLSCTTLISNVLHGNRHYPLLTQLILGGYDLINGAKLFSLDPVGGINEESSFTATGSGSPTAYGVLEAEYRSDVTIDKGLLVAVKALSSAMQRDAYSGNGISLAHINKDGVKLYSDAEIEGFLKKINKKR.

A propeptide spans 1 to 14 (removed in mature form; by autocatalysis); the sequence is MISNSEYHKEYMKG. The Nucleophile role is filled by Thr15.

The protein belongs to the peptidase T1B family. The 20S proteasome core is composed of 14 alpha and 14 beta subunits that assemble into four stacked heptameric rings, resulting in a barrel-shaped structure. The two inner rings, each composed of seven catalytic beta subunits, are sandwiched by two outer rings, each composed of seven alpha subunits. The catalytic chamber with the active sites is on the inside of the barrel. Has a gated structure, the ends of the cylinder being occluded by the N-termini of the alpha-subunits. Is capped at one or both ends by the proteasome regulatory ATPase, PAN.

The protein resides in the cytoplasm. It catalyses the reaction Cleavage of peptide bonds with very broad specificity.. With respect to regulation, the formation of the proteasomal ATPase PAN-20S proteasome complex, via the docking of the C-termini of PAN into the intersubunit pockets in the alpha-rings, triggers opening of the gate for substrate entry. Interconversion between the open-gate and close-gate conformations leads to a dynamic regulation of the 20S proteasome proteolysis activity. Its function is as follows. Component of the proteasome core, a large protease complex with broad specificity involved in protein degradation. The polypeptide is Proteasome subunit beta (Methanococcus maripaludis (strain C5 / ATCC BAA-1333)).